We begin with the raw amino-acid sequence, 119 residues long: Ribosome-binding factor A (119 aa).

This sequence belongs to the RbfA family. In terms of assembly, monomer. Binds 30S ribosomal subunits, but not 50S ribosomal subunits or 70S ribosomes.

The protein localises to the cytoplasm. One of several proteins that assist in the late maturation steps of the functional core of the 30S ribosomal subunit. Associates with free 30S ribosomal subunits (but not with 30S subunits that are part of 70S ribosomes or polysomes). Required for efficient processing of 16S rRNA. May interact with the 5'-terminal helix region of 16S rRNA. The protein is Ribosome-binding factor A of Pseudothermotoga lettingae (strain ATCC BAA-301 / DSM 14385 / NBRC 107922 / TMO) (Thermotoga lettingae).